Consider the following 750-residue polypeptide: Glycerophosphodiester phosphodiesterase GDPDL7 (750 aa).

The N-terminal stretch at 1-17 (MLRFIIFFSLFIHLCVA) is a signal peptide. GP-PDE domains lie at 41–339 (PAVV…SQSI) and 355–654 (ALVI…TRYL). Residues N134, N304, N603, and N716 are each glycosylated (N-linked (GlcNAc...) asparagine).

The protein belongs to the glycerophosphoryl diester phosphodiesterase family. In terms of tissue distribution, expressed in flowers and siliques.

The enzyme catalyses a sn-glycero-3-phosphodiester + H2O = an alcohol + sn-glycerol 3-phosphate + H(+). This Arabidopsis thaliana (Mouse-ear cress) protein is Glycerophosphodiester phosphodiesterase GDPDL7.